A 384-amino-acid chain; its full sequence is Probable L-aspartate decarboxylase (384 aa).

Position 233 is an N6-(pyridoxal phosphate)lysine (lysine 233).

It belongs to the group II decarboxylase family. MfnA subfamily. Requires pyridoxal 5'-phosphate as cofactor.

The catalysed reaction is L-aspartate + H(+) = beta-alanine + CO2. It functions in the pathway cofactor biosynthesis; coenzyme A biosynthesis. Catalyzes the decarboxylation of L-aspartate to produce beta-alanine. This Pyrococcus abyssi (strain GE5 / Orsay) protein is Probable L-aspartate decarboxylase.